Here is a 639-residue protein sequence, read N- to C-terminus: Protein DYAD (639 aa).

Basic and acidic residues predominate over residues 201–226 (RHIDTRKNKEGEESSRVKDEVYKEEE). The disordered stretch occupies residues 201–256 (RHIDTRKNKEGEESSRVKDEVYKEEEMEKEEDDDDGNEIGGTKQEAKEITNGNRKR). Residues 227 to 237 (MEKEEDDDDGN) show a composition bias toward acidic residues. Residues 351-498 (GKVAPGGQDR…RKMEEDMGWL (148 aa)) form the PI-PLC X-box domain. Residues 536–561 (NKGNQITESPQNREKGRKHDQQERSP) form a disordered region. The span at 546 to 558 (QNREKGRKHDQQE) shows a compositional bias: basic and acidic residues.

Meiocytes (at protein level).

The protein localises to the nucleus. Functionally, required for fertility. Involved in chromatid cohesion establishment, in chromosome structure during male and female meiosis (e.g. the synapse formation between homologous chromosomes, the recombination, and the cohesion of both chromatid arm and centromere), and in axial element formation. Regulates the switch from mitosis to the reductional meiosis division of megaspores prior to the female gametogenesis (megasporogenesis). This is Protein DYAD (DYAD) from Arabidopsis thaliana (Mouse-ear cress).